The chain runs to 509 residues: ATP synthase subunit beta (509 aa).

Positions 1 to 28 (MAKAATPKETAAAKKPAAPKKAASAKTA) are disordered. 187–194 (GGAGVGKT) lines the ATP pocket.

Belongs to the ATPase alpha/beta chains family. As to quaternary structure, F-type ATPases have 2 components, CF(1) - the catalytic core - and CF(0) - the membrane proton channel. CF(1) has five subunits: alpha(3), beta(3), gamma(1), delta(1), epsilon(1). CF(0) has three main subunits: a(1), b(2) and c(9-12). The alpha and beta chains form an alternating ring which encloses part of the gamma chain. CF(1) is attached to CF(0) by a central stalk formed by the gamma and epsilon chains, while a peripheral stalk is formed by the delta and b chains.

Its subcellular location is the cell inner membrane. It carries out the reaction ATP + H2O + 4 H(+)(in) = ADP + phosphate + 5 H(+)(out). Its function is as follows. Produces ATP from ADP in the presence of a proton gradient across the membrane. The catalytic sites are hosted primarily by the beta subunits. This Sinorhizobium medicae (strain WSM419) (Ensifer medicae) protein is ATP synthase subunit beta.